Here is a 328-residue protein sequence, read N- to C-terminus: Endochitinase (328 aa).

The signal sequence occupies residues 1 to 26 (MRRHKEVNFVAYLLFSLLVLVSAALA). Positions 27-68 (QNCGSQGGGKACASGQCCSKFGWCGNTNDYCGSGNCQSQCPG) constitute a Chitin-binding type-1 domain. Intrachain disulfides connect cysteine 29–cysteine 44, cysteine 38–cysteine 50, cysteine 43–cysteine 57, cysteine 62–cysteine 66, cysteine 100–cysteine 162, cysteine 174–cysteine 182, and cysteine 281–cysteine 313. Glutamate 144 serves as the catalytic Proton donor. Residues 322 to 328 (ALLVDTL) constitute a propeptide, removed in mature form.

This sequence belongs to the glycosyl hydrolase 19 family. Chitinase class I subfamily.

It is found in the vacuole. It catalyses the reaction Random endo-hydrolysis of N-acetyl-beta-D-glucosaminide (1-&gt;4)-beta-linkages in chitin and chitodextrins.. Its function is as follows. Defense against chitin-containing fungal pathogens. This Solanum tuberosum (Potato) protein is Endochitinase.